The sequence spans 405 residues: Arginine deiminase (405 aa).

The active-site Amidino-cysteine intermediate is the cysteine 395.

This sequence belongs to the arginine deiminase family.

Its subcellular location is the cytoplasm. It carries out the reaction L-arginine + H2O = L-citrulline + NH4(+). It functions in the pathway amino-acid degradation; L-arginine degradation via ADI pathway; carbamoyl phosphate from L-arginine: step 1/2. The chain is Arginine deiminase from Rhodococcus erythropolis (strain PR4 / NBRC 100887).